Consider the following 118-residue polypeptide: UPF0102 protein Csac_2148 (118 aa).

It belongs to the UPF0102 family.

This Caldicellulosiruptor saccharolyticus (strain ATCC 43494 / DSM 8903 / Tp8T 6331) protein is UPF0102 protein Csac_2148.